The primary structure comprises 453 residues: AP-4 complex subunit mu-1 (453 aa).

An MHD domain is found at 184–452 (KNEVFLDVVE…LSHSDAYVIR (269 aa)).

The protein belongs to the adaptor complexes medium subunit family. As to quaternary structure, adaptor protein complex 4 (AP-4) is a heterotetramer composed of two large adaptins (epsilon-type subunit AP4E1 and beta-type subunit AP4B1), a medium adaptin (mu-type subunit AP4M1) and a small adaptin (sigma-type AP4S1). Interacts with tyrosine-based sorting signals on the cytoplasmic tail of cargo proteins such as APP, ATG9A, LAMP2 and NAGPA. Interacts with the C-terminal domain of GRID2. Interacts with GRIA1 and GRIA2; the interaction is indirect via CACNG3. Interacts with CACNG3; CACNG3 associates GRIA1 and GRIA2 with the adaptor protein complex 4 (AP-4) to target them to the somatodendritic compartment of neurons. Interacts with HOOK1 and HOOK2; the interactions are direct, mediate the interaction between FTS-Hook-FHIP (FHF) complex and AP-4 and the perinuclear distribution of AP-4. In terms of tissue distribution, ubiquitous. Highly expressed in testis and lowly expressed in brain and lung.

The protein resides in the golgi apparatus. It localises to the trans-Golgi network membrane. Its subcellular location is the early endosome. In terms of biological role, component of the adaptor protein complex 4 (AP-4). Adaptor protein complexes are vesicle coat components involved both in vesicle formation and cargo selection. They control the vesicular transport of proteins in different trafficking pathways. AP-4 forms a non clathrin-associated coat on vesicles departing the trans-Golgi network (TGN) and may be involved in the targeting of proteins from the trans-Golgi network (TGN) to the endosomal-lysosomal system. It is also involved in protein sorting to the basolateral membrane in epithelial cells and the proper asymmetric localization of somatodendritic proteins in neurons. Within AP-4, the mu-type subunit AP4M1 is directly involved in the recognition and binding of tyrosine-based sorting signals found in the cytoplasmic part of cargos. The adaptor protein complex 4 (AP-4) may also recognize other types of sorting signal. The chain is AP-4 complex subunit mu-1 from Homo sapiens (Human).